Consider the following 45-residue polypeptide: Pseudo-hevein (45 aa).

A Chitin-binding type-1 domain is found at 1–43 (EQCGRQAGGKLCPNNLCCSQYGWCGSSDDYCSPSKNCQSNCKG). 4 disulfides stabilise this stretch: cysteine 3–cysteine 18, cysteine 12–cysteine 24, cysteine 17–cysteine 31, and cysteine 37–cysteine 41.

In terms of biological role, N-acetyl-D-glucosamine / N-acetyl-D-neuraminic acid binding lectin. Can inhibit fungal growth. This is Pseudo-hevein from Hevea brasiliensis (Para rubber tree).